The chain runs to 868 residues: Muscle, skeletal receptor tyrosine-protein kinase (868 aa).

A signal peptide spans 1 to 21 (MRELVNIPLLQMLTLVAFSGT). The Extracellular segment spans residues 22-494 (EKLPKAPVIT…FAVSPAYSMT (473 aa)). Ig-like domains lie at 28 to 116 (PVIT…GALQ), 121 to 205 (PKIT…KLVK), and 212 to 302 (ARIL…ATVS). Intrachain disulfides connect Cys49–Cys99, Cys98–Cys112, and Cys142–Cys190. A glycan (N-linked (GlcNAc...) asparagine) is linked at Asn222. Intrachain disulfides connect Cys233–Cys282, Cys317–Cys382, Cys325–Cys375, Cys366–Cys406, Cys394–Cys447, and Cys398–Cys434. The FZ domain maps to 312 to 450 (DSQGYCAQYR…HRDPTACTRL (139 aa)). An N-linked (GlcNAc...) asparagine glycan is attached at Asn338. A glycan (N-linked (GlcNAc...) asparagine) is linked at Asn459. Residues 495-515 (VIISIVSSFALFALLTIATLY) form a helical membrane-spanning segment. At 516-868 (CCRRRKEWKN…CERAEGTVGV (353 aa)) the chain is on the cytoplasmic side. Residue Tyr553 is modified to Phosphotyrosine; by autocatalysis. The 282-residue stretch at 574–855 (IEYVRDIGEG…PSFCSIHRIL (282 aa)) folds into the Protein kinase domain. ATP contacts are provided by residues 580-588 (IGEGAFGRV) and Lys608. Ser680 and Ser697 each carry phosphoserine; by CK2. Catalysis depends on Asp724, which acts as the Proton acceptor. Tyr754 carries the post-translational modification Phosphotyrosine; by autocatalysis.

The protein belongs to the protein kinase superfamily. Tyr protein kinase family. Monomer. Homodimer. Interacts with LRP4; the heterodimer forms an AGRIN receptor complex that binds AGRIN resulting in activation of MUSK. Forms a heterotetramer composed of 2 DOK7 and 2 MUSK molecules which facilitates MUSK trans-autophosphorylation on tyrosine residue and activation. Interacts (via cytoplasmic part) with DOK7 (via IRS-type PTB domain); requires MUSK phosphorylation. Interacts with DVL1 (via DEP domain); the interaction is direct and mediates the formation of a DVL1, MUSK and PAK1 ternary complex involved in AChR clustering. Interacts with PDZRN3; this interaction is enhanced by agrin. Interacts with FNTA; the interaction is direct and mediates AGRIN-induced phosphorylation and activation of FNTA. Interacts with CSNK2B; mediates regulation by CK2. Interacts (via the cytoplasmic domain) with DNAJA3. Interacts with NSF; may regulate MUSK endocytosis and activity. Interacts with CAV3; may regulate MUSK signaling. Interacts with RNF31. The cofactor is Mg(2+). In terms of processing, ubiquitinated by PDZRN3. Ubiquitination promotes endocytosis and lysosomal degradation. Post-translationally, phosphorylated. Phosphorylation is induced by AGRIN. Autophosphorylated. Autophosphorylation at Tyr-553 is required for interaction with DOK7 which in turn stimulates the phosphorylation and the activation of MUSK. Neddylated. Expressed preferentially in skeletal muscle.

Its subcellular location is the postsynaptic cell membrane. It carries out the reaction L-tyrosyl-[protein] + ATP = O-phospho-L-tyrosyl-[protein] + ADP + H(+). With respect to regulation, positively regulated by CK2. Functionally, receptor tyrosine kinase which plays a central role in the formation and the maintenance of the neuromuscular junction (NMJ), the synapse between the motor neuron and the skeletal muscle. Recruitment of AGRIN by LRP4 to the MUSK signaling complex induces phosphorylation and activation of MUSK, the kinase of the complex. The activation of MUSK in myotubes regulates the formation of NMJs through the regulation of different processes including the specific expression of genes in subsynaptic nuclei, the reorganization of the actin cytoskeleton and the clustering of the acetylcholine receptors (AChR) in the postsynaptic membrane. May regulate AChR phosphorylation and clustering through activation of ABL1 and Src family kinases which in turn regulate MUSK. DVL1 and PAK1 that form a ternary complex with MUSK are also important for MUSK-dependent regulation of AChR clustering. May positively regulate Rho family GTPases through FNTA. Mediates the phosphorylation of FNTA which promotes prenylation, recruitment to membranes and activation of RAC1 a regulator of the actin cytoskeleton and of gene expression. Other effectors of the MUSK signaling include DNAJA3 which functions downstream of MUSK. May also play a role within the central nervous system by mediating cholinergic responses, synaptic plasticity and memory formation. The protein is Muscle, skeletal receptor tyrosine-protein kinase (Musk) of Mus musculus (Mouse).